Consider the following 180-residue polypeptide: MLSSPVNLPKWLEENSHLLKPPINNYCVYNDDFTVMIVGGPNARTDYHINQTPEWFYQYKGAMMLKVVDDGNFRDIIIREGEMFLLPGNTPHNPVRFADTVGIVLEQKRPADTIDRMRWYCQNCKEIVHEASFHCTDLGTQIKAAVEAFKGNEQLRTCKKCGVLADWSPKPGSIQDPNVQ.

Residue arginine 44 participates in O2 binding. 3 residues coordinate Fe cation: histidine 48, glutamate 54, and histidine 92. Glutamate 54 is a substrate binding site. Substrate is bound by residues arginine 96 and glutamate 106. Cysteine 121, cysteine 124, cysteine 158, and cysteine 161 together coordinate a divalent metal cation.

It belongs to the 3-HAO family. It depends on Fe(2+) as a cofactor.

The protein localises to the cytoplasm. It carries out the reaction 3-hydroxyanthranilate + O2 = (2Z,4Z)-2-amino-3-carboxymuconate 6-semialdehyde. It participates in cofactor biosynthesis; NAD(+) biosynthesis; quinolinate from L-kynurenine: step 3/3. Catalyzes the oxidative ring opening of 3-hydroxyanthranilate to 2-amino-3-carboxymuconate semialdehyde, which spontaneously cyclizes to quinolinate. This chain is 3-hydroxyanthranilate 3,4-dioxygenase (bna1), found in Neurospora crassa (strain ATCC 24698 / 74-OR23-1A / CBS 708.71 / DSM 1257 / FGSC 987).